The chain runs to 149 residues: Transcriptional regulator MraZ (149 aa).

2 consecutive SpoVT-AbrB domains span residues 7–54 (KYVN…GISH) and 83–126 (AVQL…QPQN).

It belongs to the MraZ family. Forms oligomers.

The protein resides in the cytoplasm. The protein localises to the nucleoid. In Rickettsia peacockii (strain Rustic), this protein is Transcriptional regulator MraZ.